Here is a 370-residue protein sequence, read N- to C-terminus: Biotin synthase (370 aa).

Residues 79–314 (CCGNVVDLCS…KQIIRYAGGR (236 aa)) enclose the Radical SAM core domain. Residues Cys-97, Cys-101, and Cys-104 each contribute to the [4Fe-4S] cluster site. [2Fe-2S] cluster-binding residues include Cys-142, Cys-179, Cys-239, and Arg-309.

This sequence belongs to the radical SAM superfamily. Biotin synthase family. In terms of assembly, homodimer. The cofactor is [4Fe-4S] cluster. [2Fe-2S] cluster serves as cofactor.

The enzyme catalyses (4R,5S)-dethiobiotin + (sulfur carrier)-SH + 2 reduced [2Fe-2S]-[ferredoxin] + 2 S-adenosyl-L-methionine = (sulfur carrier)-H + biotin + 2 5'-deoxyadenosine + 2 L-methionine + 2 oxidized [2Fe-2S]-[ferredoxin]. It functions in the pathway cofactor biosynthesis; biotin biosynthesis; biotin from 7,8-diaminononanoate: step 2/2. In terms of biological role, catalyzes the conversion of dethiobiotin (DTB) to biotin by the insertion of a sulfur atom into dethiobiotin via a radical-based mechanism. The chain is Biotin synthase from Trichodesmium erythraeum (strain IMS101).